We begin with the raw amino-acid sequence, 504 residues long: Maturase K (504 aa).

Belongs to the intron maturase 2 family. MatK subfamily.

The protein resides in the plastid. It localises to the chloroplast. Usually encoded in the trnK tRNA gene intron. Probably assists in splicing its own and other chloroplast group II introns. The polypeptide is Maturase K (Adenostoma fasciculatum (Chamise)).